We begin with the raw amino-acid sequence, 1902 residues long: Plexin-B3 (1902 aa).

Positions 1 to 34 (MLTDFLQAPVMAPWSPFSLHLLLLFLLLLPLTRA) are cleaved as a signal peptide. The 427-residue stretch at 35 to 461 (HRFSVPNASF…TAQQVDRILV (427 aa)) folds into the Sema domain. The Extracellular segment spans residues 35-1245 (HRFSVPNASF…MISTFPVEAQ (1211 aa)). A glycan (N-linked (GlcNAc...) asparagine) is linked at Asn41. 2 cysteine pairs are disulfide-bonded: Cys88/Cys97 and Cys122/Cys130. Residue Asn221 is glycosylated (N-linked (GlcNAc...) asparagine). Cystine bridges form between Cys257-Cys360, Cys273-Cys305, and Cys323-Cys347. The segment at 353 to 372 (DSPESYPCGDEHTPSPIAGR) is disordered. N-linked (GlcNAc...) asparagine glycans are attached at residues Asn416 and Asn469. The region spanning 463 to 515 (ACPQFPNCTTCLQARDPLCGWCILQGRCTRRAECGRAVQPNQWLWSYEDNHCL) is the PSI 1 domain. Intrachain disulfides connect Cys464–Cys481, Cys470–Cys514, Cys473–Cys490, Cys484–Cys496, and Cys551–Cys569. PSI domains follow at residues 609–671 (DCSA…EACP) and 776–822 (DCAM…QLCP). 5 N-linked (GlcNAc...) asparagine glycosylation sites follow: Asn791, Asn889, Asn946, Asn1090, and Asn1207. IPT/TIG domains are found at residues 824–913 (PSID…HFTY), 915–1001 (DPVL…FRYT), and 1003–1134 (NPQL…FLYQ). Residues 1246 to 1266 (VGLGMGAAMLIAAVLLLTLMY) form a helical membrane-spanning segment. The Cytoplasmic portion of the chain corresponds to 1267 to 1902 (RHKSKQALRD…ALVEYKVTDL (636 aa)).

It belongs to the plexin family. In terms of assembly, binds MET and MST1R. Interacts with RIT2/RIN. Interacts (via cytoplasmic domain) with FSCN1 and RAC1. May form homodimers (via Sema domain). Interacts (via cytoplasmic domain) with ARHGDIA. As to expression, expressed in glioma cells (at protein level). Expressed in glioma cells and oligodendrocyte precursor cells.

The protein localises to the cell membrane. Functionally, receptor for SEMA5A that plays a role in axon guidance, invasive growth and cell migration. Stimulates neurite outgrowth and mediates Ca(2+)/Mg(2+)-dependent cell aggregation. In glioma cells, SEMA5A stimulation of PLXNB3 results in the disassembly of F-actin stress fibers, disruption of focal adhesions and cellular collapse as well as inhibition of cell migration and invasion through ARHGDIA-mediated inactivation of RAC1. The chain is Plexin-B3 (Plxnb3) from Rattus norvegicus (Rat).